A 60-amino-acid chain; its full sequence is Large ribosomal subunit protein uL30 (60 aa).

The protein belongs to the universal ribosomal protein uL30 family. Part of the 50S ribosomal subunit.

The sequence is that of Large ribosomal subunit protein uL30 from Syntrophomonas wolfei subsp. wolfei (strain DSM 2245B / Goettingen).